The sequence spans 136 residues: Small ribosomal subunit protein uS9 (136 aa).

The protein belongs to the universal ribosomal protein uS9 family.

The protein is Small ribosomal subunit protein uS9 of Borrelia garinii subsp. bavariensis (strain ATCC BAA-2496 / DSM 23469 / PBi) (Borreliella bavariensis).